Consider the following 209-residue polypeptide: Urease accessory protein UreG (209 aa).

Residue 18–25 coordinates GTP; sequence GPVGSGKT.

Belongs to the SIMIBI class G3E GTPase family. UreG subfamily. In terms of assembly, homodimer. UreD, UreF and UreG form a complex that acts as a GTP-hydrolysis-dependent molecular chaperone, activating the urease apoprotein by helping to assemble the nickel containing metallocenter of UreC. The UreE protein probably delivers the nickel.

It is found in the cytoplasm. Its function is as follows. Facilitates the functional incorporation of the urease nickel metallocenter. This process requires GTP hydrolysis, probably effectuated by UreG. The sequence is that of Urease accessory protein UreG from Cupriavidus necator (strain ATCC 17699 / DSM 428 / KCTC 22496 / NCIMB 10442 / H16 / Stanier 337) (Ralstonia eutropha).